A 663-amino-acid chain; its full sequence is Inner nuclear membrane protein HEH2 (663 aa).

Disordered stretches follow at residues 46–188 (QRLQ…ELPN) and 267–289 (ISET…KNIR). The span at 47–62 (RLQSSPEASKVRTSIQ) shows a compositional bias: polar residues. Basic and acidic residues predominate over residues 91–123 (KTVKDENVETNKRKREQISTDNEAKMQIQEEKS). A Phosphoserine modification is found at serine 123. Positions 124–134 (PKKKRKKRSSK) are enriched in basic residues. The Nuclear localization signal motif lies at 124 to 137 (PKKKRKKRSSKANK). Over residues 164 to 183 (EELHKKDSSDDKPRVKELPK) the composition is skewed to basic and acidic residues. The helical transmembrane segment at 317-337 (LFIWLWNGAIFLSIICPILFG) threads the bilayer.

As to quaternary structure, interacts with SRP1.

It localises to the nucleus inner membrane. This is Inner nuclear membrane protein HEH2 (HEH2) from Saccharomyces cerevisiae (strain ATCC 204508 / S288c) (Baker's yeast).